The primary structure comprises 281 residues: Pantothenate synthetase (281 aa).

Residue 30–37 (MGYLHEGH) coordinates ATP. His37 acts as the Proton donor in catalysis. Gln61 is a binding site for (R)-pantoate. Gln61 serves as a coordination point for beta-alanine. 147 to 150 (GQKD) is an ATP binding site. A (R)-pantoate-binding site is contributed by Gln153. ATP is bound by residues Val176 and 184-187 (MSSR).

It belongs to the pantothenate synthetase family. Homodimer.

Its subcellular location is the cytoplasm. The catalysed reaction is (R)-pantoate + beta-alanine + ATP = (R)-pantothenate + AMP + diphosphate + H(+). The protein operates within cofactor biosynthesis; (R)-pantothenate biosynthesis; (R)-pantothenate from (R)-pantoate and beta-alanine: step 1/1. Catalyzes the condensation of pantoate with beta-alanine in an ATP-dependent reaction via a pantoyl-adenylate intermediate. In Caldicellulosiruptor saccharolyticus (strain ATCC 43494 / DSM 8903 / Tp8T 6331), this protein is Pantothenate synthetase.